The sequence spans 189 residues: Pyridoxal 5'-phosphate synthase subunit PdxT (189 aa).

Position 50 to 52 (50 to 52) interacts with L-glutamine; that stretch reads GES. The Nucleophile role is filled by cysteine 80. Residues arginine 107 and 134 to 135 contribute to the L-glutamine site; that span reads IR. Active-site charge relay system residues include histidine 169 and glutamate 171.

It belongs to the glutaminase PdxT/SNO family. In terms of assembly, in the presence of PdxS, forms a dodecamer of heterodimers. Only shows activity in the heterodimer.

It carries out the reaction aldehydo-D-ribose 5-phosphate + D-glyceraldehyde 3-phosphate + L-glutamine = pyridoxal 5'-phosphate + L-glutamate + phosphate + 3 H2O + H(+). The enzyme catalyses L-glutamine + H2O = L-glutamate + NH4(+). It functions in the pathway cofactor biosynthesis; pyridoxal 5'-phosphate biosynthesis. Functionally, catalyzes the hydrolysis of glutamine to glutamate and ammonia as part of the biosynthesis of pyridoxal 5'-phosphate. The resulting ammonia molecule is channeled to the active site of PdxS. This chain is Pyridoxal 5'-phosphate synthase subunit PdxT, found in Picrophilus torridus (strain ATCC 700027 / DSM 9790 / JCM 10055 / NBRC 100828 / KAW 2/3).